Reading from the N-terminus, the 351-residue chain is Homoserine O-acetyltransferase (351 aa).

An AB hydrolase-1 domain is found at 51-334 (VIWVLHALTG…IYGHDAFLIE (284 aa)). The active-site Nucleophile is serine 146. A substrate-binding site is contributed by arginine 212. Catalysis depends on residues aspartate 299 and histidine 328. Aspartate 329 is a binding site for substrate.

It belongs to the AB hydrolase superfamily. MetX family. Homodimer.

The protein localises to the cytoplasm. The enzyme catalyses L-homoserine + acetyl-CoA = O-acetyl-L-homoserine + CoA. It participates in amino-acid biosynthesis; L-methionine biosynthesis via de novo pathway; O-acetyl-L-homoserine from L-homoserine: step 1/1. Transfers an acetyl group from acetyl-CoA to L-homoserine, forming acetyl-L-homoserine. This is Homoserine O-acetyltransferase from Cyclobacterium marinum (strain ATCC 25205 / DSM 745 / LMG 13164 / NCIMB 1802) (Flectobacillus marinus).